Consider the following 250-residue polypeptide: L-cystine transport system ATP-binding protein TcyN (250 aa).

The ABC transporter domain maps to 4–244 (IEVKNLVKKF…PEQPRTRQFL (241 aa)). 36-43 (GPSGSGKT) is an ATP binding site.

The protein belongs to the ABC transporter superfamily. In terms of assembly, the complex is composed of two ATP-binding proteins (TcyN), two transmembrane proteins (TcyL) and a solute-binding protein (TcyJ).

The protein localises to the cell inner membrane. The catalysed reaction is L-cystine(out) + ATP + H2O = L-cystine(in) + ADP + phosphate + H(+). It carries out the reaction D-cystine(out) + ATP + H2O = D-cystine(in) + ADP + phosphate + H(+). Its activity is regulated as follows. The TcyJLN system is inhibited by L-cystine, L-cysteine, DL-2,6-diaminopimelic acid and L-cystathionine, and is stimulated by D-cysteine. Its function is as follows. Part of the ABC transporter complex TcyJLN involved in L-cystine import. This high affinity cystine transporter is involved in resistance to oxidative stress by forming a L-cysteine/L-cystine shuttle system with the EamA transporter, which exports L-cysteine as reducing equivalents to the periplasm to prevent the cells from oxidative stress. Exported L-cysteine can reduce the periplasmic hydrogen peroxide to water, and then generated L-cystine is imported back into the cytoplasm via the TcyJLN complex. Functions at low cystine concentrations. The system can also transport L-cysteine, diaminopimelic acid (DAP), djenkolate, lanthionine, D-cystine, homocystine, and it mediates accumulation of the toxic compounds L-selenaproline (SCA) and L-selenocystine (SeCys). Could also facilitate threonine efflux. Responsible for energy coupling to the transport system. This Escherichia coli (strain K12) protein is L-cystine transport system ATP-binding protein TcyN.